Here is a 181-residue protein sequence, read N- to C-terminus: Probable pyruvoyl-dependent arginine decarboxylase (181 aa).

The residue at position 43 (serine 43) is a Pyruvic acid (Ser).

Belongs to the PdaD family. It depends on pyruvate as a cofactor.

It catalyses the reaction L-arginine + H(+) = agmatine + CO2. This is Probable pyruvoyl-dependent arginine decarboxylase from Chlorobium phaeovibrioides (strain DSM 265 / 1930) (Prosthecochloris vibrioformis (strain DSM 265)).